The following is an 814-amino-acid chain: MTARTPNRATGAPENANPTVRDQTQQDQGERSESPAIPSLTNKKRPRSQPDNTSSPACNQCRTRKIRCDRQQPKCSNCRRADVECDFATTPKRVDRTKQLLNDFSGVVARLDRVDNSLAKLSEQLQQQQPCRCSHSPVPSQVDNPWGASEPAAIYTTYTPKSSTSCRSPHLMEVDGSEDCDPEIPNGDLVDFDQGGQRLLDYPAALSLFKNLQRQITRWLTKDVPQGSELWQVIAQQPGFKASLEYQLEQFPFGGLCHEPVIVSDHRPISTPPRYLLELSLDGFLRHINIHTPIFDDSSLGKAIDTHYQSLSAGTGDAWALTFTNIIILTVALDARVARATASHLVSMNDDMLPSFLKNCDRALADLNRFTAPCLINVQVLLTLVRMVINFPEAYIRALVAREFYGSVVFEKVCQAVCQVARSTGLHRAHGARSMRWEKMPERERLFWVVYTMDKQRAFLTGQPCDLYLFDSDIQLRSCGERAPFPLRLNAAYVHMMTIWEQIFINLYSSRAVLAGAADRSRQVQQLWGSLNEWNIKYHALLSSPILEKMADLAPMQLELKYCFMVSQVLVHRCDRNARSQQRYRDPARSALKLIAQVAGDHRSITLARCAVLARMFRNYPLVAVHDLFSFCLTDGEPDSTEDGQLIHETRRHLELLHYADFPQAYFARLEVGLKWCTDMLDTIKDCLSRSAVAGDWGPMDGSSTGLSDRTPPSESELSSIPPDAWASLNLPMSRDEMLCGLSPSVPSEGLLDPQFSAFGLTTSSTGDSTVPAFAQGGDNPAVTMHPSMWVPAEVPCNSSEPLFDPEFTRSIMS.

Disordered regions lie at residues 1 to 59 (MTAR…PACN) and 699 to 723 (PMDG…SIPP). Polar residues-rich tracts occupy residues 16–27 (ANPTVRDQTQQD) and 49–59 (QPDNTSSPACN). A DNA-binding region (zn(2)-C6 fungal-type) is located at residues 58–85 (CNQCRTRKIRCDRQQPKCSNCRRADVEC). A compositionally biased stretch (low complexity) spans 713-723 (PSESELSSIPP).

Its subcellular location is the nucleus. Its function is as follows. Transcription factor that regulates the expression of the gene cluster that mediates the biosynthesis of oryzines, natural products with an unusual maleidride backbone. This is Transcription factor oryO from Aspergillus oryzae (strain ATCC 42149 / RIB 40) (Yellow koji mold).